The chain runs to 221 residues: Thiopurine S-methyltransferase (221 aa).

S-adenosyl-L-methionine is bound by residues tryptophan 12, leucine 47, glutamate 68, and arginine 125.

It belongs to the class I-like SAM-binding methyltransferase superfamily. TPMT family.

Its subcellular location is the cytoplasm. The enzyme catalyses S-adenosyl-L-methionine + a thiopurine = S-adenosyl-L-homocysteine + a thiopurine S-methylether.. This Legionella pneumophila (strain Corby) protein is Thiopurine S-methyltransferase.